Consider the following 636-residue polypeptide: Multicopper oxidase CTB12 (636 aa).

The first 23 residues, 1–23 (MWSVRLYPLALTLLFQCVSPAAA), serve as a signal peptide directing secretion. The Plastocyanin-like 1 domain maps to 62 to 168 (AGIGFREAIF…LYGAVVIAPD (107 aa)). Residues His-104 and His-106 each coordinate Cu cation. N-linked (GlcNAc...) asparagine glycosylation occurs at Asn-136. Cu cation contacts are provided by His-148 and His-150. Residue Asn-304 is glycosylated (N-linked (GlcNAc...) asparagine). Residues 318–381 (LTFVNPGGLY…QEKARHVVRV (64 aa)) enclose the Plastocyanin-like 2 domain. Residue Asn-472 is glycosylated (N-linked (GlcNAc...) asparagine). A Plastocyanin-like 3 domain is found at 486–613 (NVEDVPATEL…GGMGMVVLDG (128 aa)). Positions 519, 522, and 524 each coordinate Cu cation. A glycan (N-linked (GlcNAc...) asparagine) is linked at Asn-576. The Cu cation site is built by His-595, Cys-596, His-597, and His-601.

Belongs to the multicopper oxidase family.

The protein operates within mycotoxin biosynthesis. In terms of biological role, multicopper oxidase; part of the gene cluster that mediates the biosynthesis of cercosporin, a light-activated, non-host-selective toxin. The perylenequinone chromophore of cercosporin absorbs light energy to attain an electronically-activated triplet state and produces active oxygen species such as the hydroxyl radical, superoxide, hydrogen peroxide or singlet oxygen upon reaction with oxygen molecules. These reactive oxygen species cause damage to various cellular components including lipids, proteins and nucleic acids. The first step of cercosporin biosynthesis is performed by the polyketide synthase CTB1 which catalyzes the formation of nor-toralactone. The starter unit acyltransferase (SAT) domain of CTB1 initiates polyketide extension by the selective utilization of acetyl-CoA, which is elongated to the heptaketide in the beta-ketoacyl synthase (KS) domain by successive condensations with six malonyl units introduced by the malonyl acyltransferase (MAT) domain. The product template (PT) domain catalyzes C4-C9 and C2-C11 aldol cyclizations and dehydrations to a trihydroxynaphthalene, which is thought to be delivered to the thioesterase (TE) domain for product release. The bifunctional enzyme CTB3 then methylates nor-toralactone to toralactone before conducting an unusual oxidative aromatic ring opening. The O-methyltransferase CTB2 further methylates the nascent OH-6 of the CBT3 product, blocking further oxidation at this site before the reductase CTB6 reduces the 2-oxopropyl ketone at position C7, giving naphthalene. The FAD-dependent monooxygenase CTB5 in concert with the multicopper oxidase CTB12 are responsible for homodimerization of naphthalene with CTB7 installing the dioxepine moiety, finally producing cercosporin. The fasciclin domain-containing protein CTB11 might act with CTB5 and CTB12 whereas the roles of CTB9 and CTB10 have still to be elucidated. This is Multicopper oxidase CTB12 from Cercospora beticola (Sugarbeet leaf spot fungus).